Reading from the N-terminus, the 77-residue chain is Distinctin-like peptide (77 aa).

Positions 1–19 (LKKSLFLVTFLALVPLFLC) are cleaved as a signal peptide. Positions 20 to 39 (EEEKREEENEERQDDDQSEE) are excised as a propeptide.

It belongs to the frog skin active peptide (FSAP) family. As to expression, expressed by the skin glands.

Its subcellular location is the secreted. Functionally, has antimicrobial activity. The protein is Distinctin-like peptide of Pithecopus azureus (Orange-legged monkey tree frog).